The chain runs to 158 residues: Large ribosomal subunit protein uL15 (158 aa).

Positions 1-13 (MKLNEIKDNEGST) are enriched in basic and acidic residues. Residues 1–45 (MKLNEIKDNEGSTHSRKRLGRGIGSGSGKTGGRGVKGQKSRSGVA) form a disordered region. Over residues 21–35 (RGIGSGSGKTGGRGV) the composition is skewed to gly residues.

This sequence belongs to the universal ribosomal protein uL15 family. In terms of assembly, part of the 50S ribosomal subunit.

In terms of biological role, binds to the 23S rRNA. The chain is Large ribosomal subunit protein uL15 from Rhizobium leguminosarum bv. trifolii (strain WSM2304).